A 474-amino-acid polypeptide reads, in one-letter code: ATP synthase subunit beta (474 aa).

153 to 160 (GGAGVGKT) serves as a coordination point for ATP.

Belongs to the ATPase alpha/beta chains family. In terms of assembly, F-type ATPases have 2 components, CF(1) - the catalytic core - and CF(0) - the membrane proton channel. CF(1) has five subunits: alpha(3), beta(3), gamma(1), delta(1), epsilon(1). CF(0) has three main subunits: a(1), b(2) and c(9-12). The alpha and beta chains form an alternating ring which encloses part of the gamma chain. CF(1) is attached to CF(0) by a central stalk formed by the gamma and epsilon chains, while a peripheral stalk is formed by the delta and b chains.

Its subcellular location is the cell inner membrane. The enzyme catalyses ATP + H2O + 4 H(+)(in) = ADP + phosphate + 5 H(+)(out). Its function is as follows. Produces ATP from ADP in the presence of a proton gradient across the membrane. The catalytic sites are hosted primarily by the beta subunits. The polypeptide is ATP synthase subunit beta (Neorickettsia sennetsu (strain ATCC VR-367 / Miyayama) (Ehrlichia sennetsu)).